Consider the following 78-residue polypeptide: Sec-independent protein translocase protein TatA (78 aa).

Residues Met1–Gly21 traverse the membrane as a helical segment. The disordered stretch occupies residues Lys40–Val78. The segment covering Glu46–Val78 has biased composition (basic and acidic residues).

The protein belongs to the TatA/E family. In terms of assembly, the Tat system comprises two distinct complexes: a TatABC complex, containing multiple copies of TatA, TatB and TatC subunits, and a separate TatA complex, containing only TatA subunits. Substrates initially bind to the TatABC complex, which probably triggers association of the separate TatA complex to form the active translocon.

The protein resides in the cell inner membrane. Its function is as follows. Part of the twin-arginine translocation (Tat) system that transports large folded proteins containing a characteristic twin-arginine motif in their signal peptide across membranes. TatA could form the protein-conducting channel of the Tat system. This chain is Sec-independent protein translocase protein TatA, found in Shewanella sediminis (strain HAW-EB3).